The sequence spans 88 residues: uncharacterized protein (88 aa).

The signal sequence occupies residues Met1–Ala22.

This is an uncharacterized protein from Haemophilus influenzae (strain ATCC 51907 / DSM 11121 / KW20 / Rd).